Here is a 211-residue protein sequence, read N- to C-terminus: FMN-dependent NADH:quinone oxidoreductase 2 (211 aa).

Residues S10 and 17–19 (SRS) each bind FMN.

It belongs to the azoreductase type 1 family. As to quaternary structure, homodimer. FMN serves as cofactor.

It carries out the reaction 2 a quinone + NADH + H(+) = 2 a 1,4-benzosemiquinone + NAD(+). The enzyme catalyses N,N-dimethyl-1,4-phenylenediamine + anthranilate + 2 NAD(+) = 2-(4-dimethylaminophenyl)diazenylbenzoate + 2 NADH + 2 H(+). Quinone reductase that provides resistance to thiol-specific stress caused by electrophilic quinones. In terms of biological role, also exhibits azoreductase activity. Catalyzes the reductive cleavage of the azo bond in aromatic azo compounds to the corresponding amines. The sequence is that of FMN-dependent NADH:quinone oxidoreductase 2 from Listeria innocua serovar 6a (strain ATCC BAA-680 / CLIP 11262).